The sequence spans 583 residues: Septin-9 (583 aa).

M1 bears the N-acetylmethionine mark. Residues 1-14 are compositionally biased toward polar residues; it reads MKKSYSGVTRTSSG. The disordered stretch occupies residues 1 to 49; it reads MKKSYSGVTRTSSGRLRRLADPTGPALKRSFEVEEIEPPNSTPPRRVQT. The residue at position 30 (S30) is a Phosphoserine. Phosphothreonine occurs at positions 42 and 49. The residue at position 62 (K62) is an N6-acetyllysine. The tract at residues 79–105 is disordered; that stretch reads DSLSQRSPKPSLRRVELAGAKAPEPMS. 3 positions are modified to phosphoserine: S82, S85, and S89. Phosphothreonine is present on T143. The segment at 166–252 is disordered; the sequence is VETPASKIPE…TPSCVGDMAD (87 aa). A compositionally biased stretch (polar residues) spans 204-221; that stretch reads LPSQTLENSEAPMSQLQS. Y276 carries the post-translational modification Phosphotyrosine. One can recognise a Septin-type G domain in the interval 293-565; it reads QGFEFNIMVV…EAYRVKRLNE (273 aa). Residues 303–310 form a G1 motif region; the sequence is GQSGLGKS. Residue 303–310 participates in GTP binding; that stretch reads GQSGLGKS. A phosphoserine mark is found at S325 and S330. Residues T337, G363, 443 to 451, G499, and R514 each bind GTP; that span reads KADTLTLEE. The segment at 360 to 363 is G3 motif; sequence DTPG. The tract at residues 442–445 is G4 motif; sequence AKAD.

Belongs to the TRAFAC class TrmE-Era-EngA-EngB-Septin-like GTPase superfamily. Septin GTPase family. In terms of assembly, septins polymerize into heterooligomeric protein complexes that form filaments, and associate with cellular membranes, actin filaments, and microtubules. GTPase activity is required for filament formation. Interacts with SEPTIN2, SEPTIN6, SEPTIN7, SEPTIN11 and SEPTIN14. Interacts with RTKN and ARHGEF18. As to expression, expressed in all tissues examined except muscle. Isoforms are differentially expressed in testes, kidney, liver, heart, spleen and brain.

The protein resides in the cytoplasm. Its subcellular location is the cytoskeleton. Its function is as follows. Filament-forming cytoskeletal GTPase. May play a role in cytokinesis (Potential). The polypeptide is Septin-9 (Mus musculus (Mouse)).